Reading from the N-terminus, the 843-residue chain is Protein translocase subunit SecA 1 (843 aa).

ATP is bound by residues glutamine 91, 109 to 113, and aspartate 498; that span reads GEGKT. Basic and acidic residues predominate over residues 799–813; that stretch reads EAKHVSAEDGKEKVK. The tract at residues 799–826 is disordered; sequence EAKHVSAEDGKEKVKPKPIVKGDQVGRN. Cysteine 829, cysteine 831, cysteine 840, and histidine 841 together coordinate Zn(2+).

The protein belongs to the SecA family. As to quaternary structure, monomer and homodimer. Part of the essential Sec protein translocation apparatus which comprises SecA, SecYEG and auxiliary proteins SecDF. Other proteins may also be involved. Zn(2+) is required as a cofactor.

It is found in the cell membrane. The protein resides in the cytoplasm. It catalyses the reaction ATP + H2O + cellular proteinSide 1 = ADP + phosphate + cellular proteinSide 2.. Its function is as follows. Part of the Sec protein translocase complex. Interacts with the SecYEG preprotein conducting channel. Has a central role in coupling the hydrolysis of ATP to the transfer of proteins into and across the cell membrane, serving as an ATP-driven molecular motor driving the stepwise translocation of polypeptide chains across the membrane. This Staphylococcus aureus (strain N315) protein is Protein translocase subunit SecA 1.